Here is a 930-residue protein sequence, read N- to C-terminus: MGSDEEDFVFHGTPIEREEEIASRKKKAVAGASGNLRTLPAWKQEVTDEEGRRRFHGAFTGGYSAGYYNTVGSKEGWAPQSFTSSRQNRAGARKQSISDFLDEDEKADMEGKSLSASSQFDTFGFTAAEHSRKHAEKEQHERPSAIPGPVPDELVAPVSESIGVKLLLKMGWRRGHSIKEVRASSDARREARKAFLAFYTDENTKETPDSLVSETEVETSLGEDIKISESTPVYVLNPKQDLHGLGYDPFKHAPEFREKKRSRMSANKEVGFRKPLSMKESLFGPKSGKIAPGFGIGALEELDVEDEDVYAGYDFDQTYVIEDEQPARQSNDNRLRLTSKEHDVLPGFGAAKNSDYSMERFNPPIIPKDFVARHKFSGPLEAETKPTVSAPPEVPPPADNNLKLLIEGFATFVSRCGKLYEDLSREKNQSNQLFDFLREGNGHDYYARRLWEEQQKRKDQSKLTLDVKVSPTVQKMTAETRGSLLGEKPLQRSLKETDTSASSGGSFQFPTNLSDTFTKSASSQEAADAVKPFKDDPAKQERFEQFLKEKYKGGLRTTDSNRVNSMSESARAQERLDFEAAAEAIEKGKAYKEVRRATEQPLDFLAGGLQFTSGGTEQIKDTGVVDMKSSKTYPKREEFQWRPSPLLCKRFDLPDPFMGKLPPAPRARNKMDSLVFLPDTVKAASARQVSESQVPKKETSIEEPEVEVEVENVERPVDLYKAIFSDDSEDDEDQPMNGKIQEGQEKKNEAAATTLNRLIAGDFLESLGKELGFEVPMEEEIKSRSKPEDSSDKRLDRPGLKEKVEEKTSSLTLGSEEEKSRKKREKSPGKRSGGNDLSSSESSGDERRRKRYNKKDRHRNDSESDSSSDYHSRDKQGSRSRSKRRESSREKRSSHKKHSKHRRTKKSSSSRYSSDEEQKESRREKKRRRD.

Lysine 25 is covalently cross-linked (Glycyl lysine isopeptide (Lys-Gly) (interchain with G-Cter in ubiquitin)). Residues 76–152 form a disordered region; it reads GWAPQSFTSS…PSAIPGPVPD (77 aa). Residues 159–199 form the G-patch domain; that stretch reads SESIGVKLLLKMGWRRGHSIKEVRASSDARREARKAFLAFY. The stretch at 405–447 is one SURP motif repeat; that stretch reads LIEGFATFVSRCGKLYEDLSREKNQSNQLFDFLREGNGHDYYA. 3 disordered regions span residues 478-508, 687-751, and 773-930; these read AETR…GSFQ, RQVS…NEAA, and FEVP…RRRD. Residues 489 to 498 are compositionally biased toward basic and acidic residues; that stretch reads PLQRSLKETD. The span at 499–508 shows a compositional bias: polar residues; sequence TSASSGGSFQ. Positions 701–711 are enriched in acidic residues; sequence IEEPEVEVEVE. Residues 779–808 are compositionally biased toward basic and acidic residues; that stretch reads EEIKSRSKPEDSSDKRLDRPGLKEKVEEKT. Basic residues predominate over residues 848 to 857; it reads RRKRYNKKDR. The segment covering 858 to 877 has biased composition (basic and acidic residues); it reads HRNDSESDSSSDYHSRDKQG. Over residues 892–908 the composition is skewed to basic residues; it reads RSSHKKHSKHRRTKKSS. Residues 913 to 923 show a composition bias toward basic and acidic residues; it reads SSDEEQKESRR.

Expressed in vasculature of cotyledons and leaves, young meristematic tissues, trichomes and pistils.

Its subcellular location is the nucleus speckle. The protein resides in the nucleus. It localises to the nucleoplasm. Functions as a component of microRNA (miRNA) and small interfering RNA (siRNA) biogenesis. May assist DCL1 and DCL4 to efficiently process and/or recruit the precursors of miRNAs and siRNAs. In the miRNA biogenesis pathway, associates with the DCL1 complex that processes primary miRNAs (pri-miRNAs) into miRNAs. Binds pri-miRNAs and precursor miRNAs (pre-miRNAs). Is required for the interaction between pri-miRNAs and DRB1. Required for general proper plant growth and, in particular, initiation of vascular development. Interacts genetically with AMP1, a glutamate carboxypeptidase involved in the regulation of meristem function. This is G patch domain-containing protein TGH from Arabidopsis thaliana (Mouse-ear cress).